Reading from the N-terminus, the 94-residue chain is Virion membrane protein OPG135 (94 aa).

A signal peptide spans 1 to 22; the sequence is MSCYTAILKSVGGLALFQVANG. Over 23–45 the chain is Intravirion; it reads AIDLCRHFFMYFCEQKLRPNSFW. Residues 46–66 form a helical membrane-spanning segment; the sequence is FVVVRAIASMIMYLVLGIALL. The Virion surface portion of the chain corresponds to 67–83; that stretch reads YISEQDNKKNTNNDKRN. Positions 74-84 are enriched in basic and acidic residues; that stretch reads KKNTNNDKRNE. The interval 74-94 is disordered; sequence KKNTNNDKRNESSINSNSSPK. Residue asparagine 83 is glycosylated (N-linked (GlcNAc...) asparagine; by host). Over residues 85–94 the composition is skewed to polar residues; sequence SSINSNSSPK.

This sequence belongs to the oerthopoxvirus OPG135 family.

The protein resides in the virion membrane. It localises to the host cytoplasm. In terms of biological role, envelope protein. Required for an early step in virion morphogenesis. The polypeptide is Virion membrane protein OPG135 (OPG135) (Homo sapiens (Human)).